The primary structure comprises 84 residues: Esculentin-1SIa (84 aa).

The first 22 residues, 1–22, serve as a signal peptide directing secretion; sequence MFTLKKPLLLIVLLGIISLSLC. The propeptide at 23-36 is removed in mature form; the sequence is EQERAADEDEGSEI. A disulfide bridge links Cys-78 with Cys-84.

As to expression, expressed by the skin glands.

The protein resides in the secreted. Its function is as follows. Has antimicrobial activity against Gram-negative bacterium E.coli ATCC 8739 (MIC=6.3 ug), against Gram positive bacteria S.aureus ATCC 6538 (MIC=3.1 ug), methicillin-resistant S.aureus ATCC 43300 (MIC=25 ug) and B.subtilis ATCC 6633 (MIC=25 ug). Has no activity against fungus C.albicans ATCC 90028. The protein is Esculentin-1SIa of Odorrana ishikawae (Ishikawa's frog).